The sequence spans 139 residues: uncharacterized protein (139 aa).

It localises to the mitochondrion. This is an uncharacterized protein from Marchantia polymorpha (Common liverwort).